Reading from the N-terminus, the 166-residue chain is Putative 4-hydroxy-4-methyl-2-oxoglutarate aldolase (166 aa).

Substrate is bound by residues 74 to 77 (GDQI) and Arg-96. Asp-97 provides a ligand contact to a divalent metal cation.

It belongs to the class II aldolase/RraA-like family. Homotrimer. It depends on a divalent metal cation as a cofactor.

It catalyses the reaction 4-hydroxy-4-methyl-2-oxoglutarate = 2 pyruvate. The catalysed reaction is oxaloacetate + H(+) = pyruvate + CO2. Catalyzes the aldol cleavage of 4-hydroxy-4-methyl-2-oxoglutarate (HMG) into 2 molecules of pyruvate. Also contains a secondary oxaloacetate (OAA) decarboxylase activity due to the common pyruvate enolate transition state formed following C-C bond cleavage in the retro-aldol and decarboxylation reactions. The polypeptide is Putative 4-hydroxy-4-methyl-2-oxoglutarate aldolase (Xanthomonas axonopodis pv. citri (strain 306)).